A 406-amino-acid polypeptide reads, in one-letter code: NADH-quinone oxidoreductase subunit D (406 aa).

The protein belongs to the complex I 49 kDa subunit family. As to quaternary structure, NDH-1 is composed of 14 different subunits. Subunits NuoB, C, D, E, F, and G constitute the peripheral sector of the complex.

Its subcellular location is the cell inner membrane. It carries out the reaction a quinone + NADH + 5 H(+)(in) = a quinol + NAD(+) + 4 H(+)(out). NDH-1 shuttles electrons from NADH, via FMN and iron-sulfur (Fe-S) centers, to quinones in the respiratory chain. The immediate electron acceptor for the enzyme in this species is believed to be ubiquinone. Couples the redox reaction to proton translocation (for every two electrons transferred, four hydrogen ions are translocated across the cytoplasmic membrane), and thus conserves the redox energy in a proton gradient. In Leptospira biflexa serovar Patoc (strain Patoc 1 / Ames), this protein is NADH-quinone oxidoreductase subunit D.